The chain runs to 132 residues: Large ribosomal subunit protein uL22c (132 aa).

Belongs to the universal ribosomal protein uL22 family. Part of the 50S ribosomal subunit.

It localises to the plastid. The protein localises to the chloroplast. In terms of biological role, this protein binds specifically to 23S rRNA. Functionally, the globular domain of the protein is located near the polypeptide exit tunnel on the outside of the subunit, while an extended beta-hairpin is found that lines the wall of the exit tunnel in the center of the 70S ribosome. The sequence is that of Large ribosomal subunit protein uL22c (rpl22) from Staurastrum punctulatum (Green alga).